The sequence spans 136 residues: Diuretic hormone 41 (136 aa).

Residues 1–26 form the signal peptide; sequence MMWWAVWCAAMVAGSVFTAAAPPTDS. The propeptide occupies 27 to 76; it reads IDLMQMDPSLADDESLGFAMQSLSGRYAAAPWLYLLADVSHDPQNGSDRV. Position 119 is an isoleucine amide (isoleucine 119). A propeptide spanning residues 123 to 136 is cleaved from the precursor; that stretch reads GFHWAPSAKAAKFY.

The protein belongs to the sauvagine/corticotropin-releasing factor/urotensin I family.

Its subcellular location is the secreted. Regulation of fluid secretion. The chain is Diuretic hormone 41 (dh41) from Bombyx mori (Silk moth).